A 427-amino-acid polypeptide reads, in one-letter code: Tol-Pal system protein TolB (427 aa).

An N-terminal signal peptide occupies residues 1–23 (MKLLKRLVSVFAIVLAVGSNAFA).

The protein belongs to the TolB family. As to quaternary structure, the Tol-Pal system is composed of five core proteins: the inner membrane proteins TolA, TolQ and TolR, the periplasmic protein TolB and the outer membrane protein Pal. They form a network linking the inner and outer membranes and the peptidoglycan layer.

It is found in the periplasm. Functionally, part of the Tol-Pal system, which plays a role in outer membrane invagination during cell division and is important for maintaining outer membrane integrity. The chain is Tol-Pal system protein TolB from Haemophilus influenzae (strain 86-028NP).